We begin with the raw amino-acid sequence, 63 residues long: U7-theraphotoxin-Cg1a (63 aa).

Residues 1–21 (MKTSILFVIFGLALLFALSVA) form the signal peptide. A propeptide spanning residues 22-31 (IEMEEEETDR) is cleaved from the precursor. 3 disulfide bridges follow: Cys-33–Cys-47, Cys-40–Cys-52, and Cys-46–Cys-59.

In terms of tissue distribution, expressed by the venom gland.

The protein localises to the secreted. In terms of biological role, inhibits preferentially tetrodotoxin-insensitive sodium currents (Nav) on rat cardiac myocytes (IC(50) is 0.26 uM) and has weaker inhibition activity toward tetrodotoxin-sensitive sodium currents on rat dorsal root ganglion (DRG) sensory neurons (IC(50) is 0.83 uM) and on cockroach dorsal unpaired median (DUM) neurons (IC(50) is 1.19 uM). Has no significant effect on potassium currents on DRG neurons. The polypeptide is U7-theraphotoxin-Cg1a (Chilobrachys guangxiensis (Chinese earth tiger tarantula)).